The primary structure comprises 166 residues: Putative membrane protein 164 (166 aa).

At 1–4 (MYHP) the chain is on the intravirion side. A helical transmembrane segment spans residues 5 to 25 (VVQVLIGLILVIILILGFYHL). Topologically, residues 26 to 166 (KKKSCKTDTD…TIMGIARNIL (141 aa)) are virion surface.

Belongs to the asfivirus envelope protein p22 family.

The protein resides in the virion membrane. The protein localises to the host cell membrane. The polypeptide is Putative membrane protein 164 (Ornithodoros (relapsing fever ticks)).